Consider the following 208-residue polypeptide: Imidazoleglycerol-phosphate dehydratase (208 aa).

This sequence belongs to the imidazoleglycerol-phosphate dehydratase family.

The protein localises to the cytoplasm. The catalysed reaction is D-erythro-1-(imidazol-4-yl)glycerol 3-phosphate = 3-(imidazol-4-yl)-2-oxopropyl phosphate + H2O. It participates in amino-acid biosynthesis; L-histidine biosynthesis; L-histidine from 5-phospho-alpha-D-ribose 1-diphosphate: step 6/9. This chain is Imidazoleglycerol-phosphate dehydratase, found in Paenarthrobacter aurescens (strain TC1).